The primary structure comprises 359 residues: Endoglucanase (359 aa).

Residues M1–A23 form the signal peptide. E53 (proton donor) is an active-site residue. The Nucleophile role is filled by D110.

The protein belongs to the glycosyl hydrolase 8 (cellulase D) family.

The catalysed reaction is Endohydrolysis of (1-&gt;4)-beta-D-glucosidic linkages in cellulose, lichenin and cereal beta-D-glucans.. The biological conversion of cellulose to glucose generally requires three types of hydrolytic enzymes: (1) Endoglucanases which cut internal beta-1,4-glucosidic bonds; (2) Exocellobiohydrolases that cut the disaccharide cellobiose from the non-reducing end of the cellulose polymer chain; (3) Beta-1,4-glucosidases which hydrolyze the cellobiose and other short cello-oligosaccharides to glucose. This is Endoglucanase from Cellulomonas uda.